A 103-amino-acid chain; its full sequence is Gene 56 protein (103 aa).

Residues 9 to 103 (WDGAHVRTLF…DYYTASETGL (95 aa)) enclose the Glutaredoxin domain.

The sequence is that of Gene 56 protein (56) from Mycobacterium phage L5 (Mycobacteriophage L5).